The primary structure comprises 309 residues: Malate dehydrogenase (309 aa).

NAD(+) contacts are provided by residues 8-13 (GAGLVG) and Asp33. The substrate site is built by Arg82 and Arg88. Residues Asn95 and 118–120 (VSN) contribute to the NAD(+) site. 2 residues coordinate substrate: Asn120 and Arg151. His175 serves as the catalytic Proton acceptor.

It belongs to the LDH/MDH superfamily. MDH type 3 family.

The enzyme catalyses (S)-malate + NAD(+) = oxaloacetate + NADH + H(+). Its function is as follows. Catalyzes the reversible oxidation of malate to oxaloacetate. This Pseudomonas putida (strain GB-1) protein is Malate dehydrogenase.